The chain runs to 277 residues: Large ribosomal subunit protein uL2 (277 aa).

3 disordered regions span residues 1 to 23, 36 to 58, and 219 to 277; these read MAIK…DFAE, PLHK…GGGH, and TVRG…RKNK. The span at 8–20 shows a compositional bias: polar residues; that stretch reads PTSNGRRGMTSSD. The span at 258–277 shows a compositional bias: basic residues; that stretch reads KTRKKKNKSDKFIVRRRKNK.

The protein belongs to the universal ribosomal protein uL2 family. Part of the 50S ribosomal subunit. Forms a bridge to the 30S subunit in the 70S ribosome.

In terms of biological role, one of the primary rRNA binding proteins. Required for association of the 30S and 50S subunits to form the 70S ribosome, for tRNA binding and peptide bond formation. It has been suggested to have peptidyltransferase activity; this is somewhat controversial. Makes several contacts with the 16S rRNA in the 70S ribosome. The chain is Large ribosomal subunit protein uL2 from Bacillus licheniformis (strain ATCC 14580 / DSM 13 / JCM 2505 / CCUG 7422 / NBRC 12200 / NCIMB 9375 / NCTC 10341 / NRRL NRS-1264 / Gibson 46).